The following is a 64-amino-acid chain: MNNPNIVPPHFNQHQQQNHNQNQPPHHMNNPNIIPPPQRFNNSNVVPHFNQLSNQNQPPQRPQY.

The interval 1 to 64 (MNNPNIVPPH…QNQPPQRPQY (64 aa)) is disordered. Residues 8–32 (PPHFNQHQQQNHNQNQPPHHMNNPN) show a composition bias toward low complexity.

This is an uncharacterized protein from Dictyostelium discoideum (Social amoeba).